The sequence spans 398 residues: Phytoene synthase, chloroplastic (398 aa).

This sequence belongs to the phytoene/squalene synthase family. As to quaternary structure, monomer.

The protein localises to the plastid. It localises to the chloroplast. It catalyses the reaction 2 (2E,6E,10E)-geranylgeranyl diphosphate = 15-cis-phytoene + 2 diphosphate. The protein operates within carotenoid biosynthesis; phytoene biosynthesis; all-trans-phytoene from geranylgeranyl diphosphate: step 1/1. Functionally, catalyzes the reaction from prephytoene diphosphate to phytoene. This Daucus carota (Wild carrot) protein is Phytoene synthase, chloroplastic (PSY).